Consider the following 177-residue polypeptide: MSRIGKKPVQVPAGITATVDGQKVTAKGPKGELFFVANDEISLKLENNAVVVTPVNQTKDARSKWGMSRTMIEGIFKGVKDGFERKLEINGVGYRAAMQGKNLQLALGFSHDVIYEPPVGISIVVPKPTEIVVSGINKQQVGQVAAEIREYRGPEPYKGKGVKYADERIVRKEGKKK.

Belongs to the universal ribosomal protein uL6 family. Part of the 50S ribosomal subunit.

This protein binds to the 23S rRNA, and is important in its secondary structure. It is located near the subunit interface in the base of the L7/L12 stalk, and near the tRNA binding site of the peptidyltransferase center. This chain is Large ribosomal subunit protein uL6, found in Rhizobium johnstonii (strain DSM 114642 / LMG 32736 / 3841) (Rhizobium leguminosarum bv. viciae).